The chain runs to 204 residues: High frequency lysogenization protein HflD homolog (204 aa).

It belongs to the HflD family.

It is found in the cytoplasm. The protein localises to the cell inner membrane. This is High frequency lysogenization protein HflD homolog from Aeromonas hydrophila subsp. hydrophila (strain ATCC 7966 / DSM 30187 / BCRC 13018 / CCUG 14551 / JCM 1027 / KCTC 2358 / NCIMB 9240 / NCTC 8049).